Reading from the N-terminus, the 230-residue chain is ATP synthase subunit a 1 (230 aa).

5 consecutive transmembrane segments (helical) span residues 20-40, 78-98, 112-132, 174-194, and 195-215; these read ATIVFSWLVMLILVLGSWLIT, FLPFIGTLFLFITMANLLTIF, AALALCVFVAVPIYGIKNVGI, LLVAILISIVPLFFPAVMTLF, and GLLVGVIQAYVFTILAMVYIA.

Belongs to the ATPase A chain family. In terms of assembly, F-type ATPases have 2 components, CF(1) - the catalytic core - and CF(0) - the membrane proton channel. CF(1) has five subunits: alpha(3), beta(3), gamma(1), delta(1), epsilon(1). CF(0) has four main subunits: a, b, b' and c.

The protein resides in the cellular thylakoid membrane. Key component of the proton channel; it plays a direct role in the translocation of protons across the membrane. This chain is ATP synthase subunit a 1, found in Crocosphaera subtropica (strain ATCC 51142 / BH68) (Cyanothece sp. (strain ATCC 51142)).